Here is a 253-residue protein sequence, read N- to C-terminus: Peptidase inhibitor R3HDML (253 aa).

The N-terminal stretch at 1 to 24 is a signal peptide; the sequence is MPLLPSTVGLAGLLFWAGQAVNAL. Residues 25-56 constitute a propeptide that is removed on maturation; the sequence is IMPNATPAPAQPESTAMRLLSGLEVPRYRRKR. The region spanning 67 to 207 is the SCP domain; it reads LDYHNHIRAS…HRAAYLVCNY (141 aa). Residue Asn-120 is glycosylated (N-linked (GlcNAc...) asparagine).

This sequence belongs to the CRISP family.

It is found in the secreted. Putative serine protease inhibitor. The polypeptide is Peptidase inhibitor R3HDML (R3HDML) (Homo sapiens (Human)).